A 1155-amino-acid polypeptide reads, in one-letter code: uncharacterized protein (1155 aa).

An N-terminal signal peptide occupies residues 1–19; that stretch reads MNKNIFITLLISSLLLLSG. A lipid anchor (N-palmitoyl cysteine) is attached at cysteine 20. Cysteine 20 is lipidated: S-diacylglycerol cysteine. The next 4 membrane-spanning stretches (helical) occupy residues 291–311, 395–415, 424–444, and 459–479; these read VSAI…IGNI, LGFI…FLIF, ALIT…FMLF, and ISYA…SMII.

This sequence belongs to the TrbL/VirB6 family.

It localises to the cell membrane. This is an uncharacterized protein from Rickettsia felis (strain ATCC VR-1525 / URRWXCal2) (Rickettsia azadi).